Here is a 249-residue protein sequence, read N- to C-terminus: Ribonuclease 3 (249 aa).

The RNase III domain maps to 29 to 151; sequence SSDIEVIKKN…LIGALYECLR (123 aa). Glu65 lines the Mg(2+) pocket. Residue Asp69 is part of the active site. Mg(2+) is bound by residues Glu137 and Glu140. The active site involves Glu140. The region spanning 179–249 is the DRBM domain; that stretch reads NEKSALQEWS…AKEALKKLTN (71 aa). The segment at 227 to 249 is disordered; the sequence is GWGSSRKKAQKEAAKEALKKLTN. Over residues 236 to 249 the composition is skewed to basic and acidic residues; it reads QKEAAKEALKKLTN.

This sequence belongs to the ribonuclease III family. Homodimer. Mg(2+) serves as cofactor.

The protein resides in the cytoplasm. It catalyses the reaction Endonucleolytic cleavage to 5'-phosphomonoester.. Digests double-stranded RNA. Involved in the processing of primary rRNA transcript to yield the immediate precursors to the large and small rRNAs (23S and 16S). Processes some mRNAs, and tRNAs when they are encoded in the rRNA operon. Processes pre-crRNA and tracrRNA of type II CRISPR loci if present in the organism. The protein is Ribonuclease 3 of Prochlorococcus marinus (strain SARG / CCMP1375 / SS120).